Consider the following 229-residue polypeptide: Potassium/proton antiporter CemA (229 aa).

Helical transmembrane passes span 7-27 (LTPF…SLSF), 106-126 (IVLH…YYFL), and 189-209 (IISG…KYWI).

This sequence belongs to the CemA family.

It is found in the plastid. The protein resides in the chloroplast inner membrane. The enzyme catalyses K(+)(in) + H(+)(out) = K(+)(out) + H(+)(in). Functionally, contributes to K(+)/H(+) antiport activity by supporting proton efflux to control proton extrusion and homeostasis in chloroplasts in a light-dependent manner to modulate photosynthesis. Prevents excessive induction of non-photochemical quenching (NPQ) under continuous-light conditions. Indirectly promotes efficient inorganic carbon uptake into chloroplasts. The protein is Potassium/proton antiporter CemA of Calycanthus floridus var. glaucus (Eastern sweetshrub).